A 131-amino-acid chain; its full sequence is Hypocretin neuropeptide precursor (131 aa).

A Pyrrolidone carboxylic acid modification is found at glutamine 34. Disulfide bonds link cysteine 39–cysteine 45 and cysteine 40–cysteine 47. Leucine 66 bears the Leucine amide mark. Residues 104–131 (EPALRPCSGRRCPSEAASSVAPGGRSGV) form a disordered region.

It belongs to the orexin family.

It is found in the rough endoplasmic reticulum. The protein resides in the cytoplasmic vesicle. Its subcellular location is the synapse. Functionally, neuropeptides that play a significant role in the regulation of food intake and sleep-wakefulness, possibly by coordinating the complex behavioral and physiologic responses of these complementary homeostatic functions. A broader role in the homeostatic regulation of energy metabolism, autonomic function, hormonal balance and the regulation of body fluids, is also suggested. In terms of biological role, binds to orexin receptors HCRTR1/OX1R and HCRTR2/OX2R with a high affinity. Stimulates food intake. Modulates pituitary luteinizing hormone secretion in an ovarian steroid-dependent manner. Binds to orexin receptor HCRTR2/OX2R only. Stimulates food intake. Modulates pituitary luteinizing hormone secretion in an ovarian steroid-dependent manner. This Bos taurus (Bovine) protein is Hypocretin neuropeptide precursor (HCRT).